We begin with the raw amino-acid sequence, 197 residues long: ATP-dependent Clp protease proteolytic subunit (197 aa).

S98 serves as the catalytic Nucleophile. Residue H123 is part of the active site.

The protein belongs to the peptidase S14 family. As to quaternary structure, fourteen ClpP subunits assemble into 2 heptameric rings which stack back to back to give a disk-like structure with a central cavity, resembling the structure of eukaryotic proteasomes.

The protein localises to the cytoplasm. The catalysed reaction is Hydrolysis of proteins to small peptides in the presence of ATP and magnesium. alpha-casein is the usual test substrate. In the absence of ATP, only oligopeptides shorter than five residues are hydrolyzed (such as succinyl-Leu-Tyr-|-NHMec, and Leu-Tyr-Leu-|-Tyr-Trp, in which cleavage of the -Tyr-|-Leu- and -Tyr-|-Trp bonds also occurs).. Its function is as follows. Cleaves peptides in various proteins in a process that requires ATP hydrolysis. Has a chymotrypsin-like activity. Plays a major role in the degradation of misfolded proteins. This chain is ATP-dependent Clp protease proteolytic subunit, found in Lysinibacillus sphaericus (strain C3-41).